A 496-amino-acid chain; its full sequence is Probable cytosol aminopeptidase (496 aa).

Mn(2+) is bound by residues Lys262 and Asp267. The active site involves Lys274. Asp285, Asp344, and Glu346 together coordinate Mn(2+). Arg348 is an active-site residue.

This sequence belongs to the peptidase M17 family. Mn(2+) is required as a cofactor.

It is found in the cytoplasm. It carries out the reaction Release of an N-terminal amino acid, Xaa-|-Yaa-, in which Xaa is preferably Leu, but may be other amino acids including Pro although not Arg or Lys, and Yaa may be Pro. Amino acid amides and methyl esters are also readily hydrolyzed, but rates on arylamides are exceedingly low.. It catalyses the reaction Release of an N-terminal amino acid, preferentially leucine, but not glutamic or aspartic acids.. Presumably involved in the processing and regular turnover of intracellular proteins. Catalyzes the removal of unsubstituted N-terminal amino acids from various peptides. This chain is Probable cytosol aminopeptidase, found in Rhizobium etli (strain CIAT 652).